The chain runs to 394 residues: Queuine tRNA-ribosyltransferase (394 aa).

Aspartate 99 acts as the Proton acceptor in catalysis. Residues 99 to 103 (DSGGF), aspartate 153, glutamine 195, and glycine 222 contribute to the substrate site. Positions 253–259 (GVGHPED) are RNA binding. Residue aspartate 272 is the Nucleophile of the active site. The RNA binding; important for wobble base 34 recognition stretch occupies residues 277-281 (TRTGR). Positions 310, 312, 315, and 341 each coordinate Zn(2+).

It belongs to the queuine tRNA-ribosyltransferase family. In terms of assembly, homodimer. Within each dimer, one monomer is responsible for RNA recognition and catalysis, while the other monomer binds to the replacement base PreQ1. Requires Zn(2+) as cofactor.

It carries out the reaction 7-aminomethyl-7-carbaguanine + guanosine(34) in tRNA = 7-aminomethyl-7-carbaguanosine(34) in tRNA + guanine. The protein operates within tRNA modification; tRNA-queuosine biosynthesis. Catalyzes the base-exchange of a guanine (G) residue with the queuine precursor 7-aminomethyl-7-deazaguanine (PreQ1) at position 34 (anticodon wobble position) in tRNAs with GU(N) anticodons (tRNA-Asp, -Asn, -His and -Tyr). Catalysis occurs through a double-displacement mechanism. The nucleophile active site attacks the C1' of nucleotide 34 to detach the guanine base from the RNA, forming a covalent enzyme-RNA intermediate. The proton acceptor active site deprotonates the incoming PreQ1, allowing a nucleophilic attack on the C1' of the ribose to form the product. After dissociation, two additional enzymatic reactions on the tRNA convert PreQ1 to queuine (Q), resulting in the hypermodified nucleoside queuosine (7-(((4,5-cis-dihydroxy-2-cyclopenten-1-yl)amino)methyl)-7-deazaguanosine). The polypeptide is Queuine tRNA-ribosyltransferase (Deinococcus radiodurans (strain ATCC 13939 / DSM 20539 / JCM 16871 / CCUG 27074 / LMG 4051 / NBRC 15346 / NCIMB 9279 / VKM B-1422 / R1)).